Consider the following 267-residue polypeptide: Glutamate racemase (267 aa).

Residues D9–S10 and Y41–S42 contribute to the substrate site. The active-site Proton donor/acceptor is the C73. N74–T75 contributes to the substrate binding site. C184 serves as the catalytic Proton donor/acceptor. T185–H186 provides a ligand contact to substrate.

This sequence belongs to the aspartate/glutamate racemases family.

It carries out the reaction L-glutamate = D-glutamate. The protein operates within cell wall biogenesis; peptidoglycan biosynthesis. In terms of biological role, provides the (R)-glutamate required for cell wall biosynthesis. In Actinobacillus pleuropneumoniae serotype 7 (strain AP76), this protein is Glutamate racemase.